A 339-amino-acid chain; its full sequence is Anthranilate phosphoribosyltransferase (339 aa).

5-phospho-alpha-D-ribose 1-diphosphate-binding positions include glycine 81, 84–85, serine 89, 91–94, 109–117, and alanine 121; these read GD, NVSS, and KHGNRALSS. Glycine 81 contributes to the anthranilate binding site. Serine 93 serves as a coordination point for Mg(2+). Asparagine 112 provides a ligand contact to anthranilate. An anthranilate-binding site is contributed by arginine 167. The Mg(2+) site is built by aspartate 225 and glutamate 226.

Belongs to the anthranilate phosphoribosyltransferase family. In terms of assembly, homodimer. Mg(2+) is required as a cofactor.

It catalyses the reaction N-(5-phospho-beta-D-ribosyl)anthranilate + diphosphate = 5-phospho-alpha-D-ribose 1-diphosphate + anthranilate. It participates in amino-acid biosynthesis; L-tryptophan biosynthesis; L-tryptophan from chorismate: step 2/5. In terms of biological role, catalyzes the transfer of the phosphoribosyl group of 5-phosphorylribose-1-pyrophosphate (PRPP) to anthranilate to yield N-(5'-phosphoribosyl)-anthranilate (PRA). The polypeptide is Anthranilate phosphoribosyltransferase (Brucella abortus (strain S19)).